A 101-amino-acid chain; its full sequence is Glutaredoxin-1 (101 aa).

Positions 5 to 101 (KDRVEKLIQT…GSLSKMIAAL (97 aa)) constitute a Glutaredoxin domain. A disulfide bridge connects residues C25 and C28.

This sequence belongs to the glutaredoxin family.

It is found in the cytoplasm. The protein localises to the cytosol. In terms of biological role, multifunctional enzyme with glutathione-dependent oxidoreductase, glutathione peroxidase and glutathione S-transferase (GST) activity. The disulfide bond functions as an electron carrier in the glutathione-dependent synthesis of deoxyribonucleotides by the enzyme ribonucleotide reductase. In addition, it is also involved in reducing cytosolic protein- and non-protein-disulfides in a coupled system with glutathione reductase. May play a role in protection against oxidative stress caused by superoxide in vivo by regulating the redox state of the protein sulfhydryl groups. The polypeptide is Glutaredoxin-1 (Rhizophagus irregularis (strain DAOM 181602 / DAOM 197198 / MUCL 43194) (Arbuscular mycorrhizal fungus)).